Reading from the N-terminus, the 1217-residue chain is Endonuclease YhcR (1217 aa).

Positions 1–46 (MLSVEMISRQNRCHYVYKGGNMMRRILHIVLITALMFLNVMYTFEA) are cleaved as a signal peptide. Positions 376–517 (GEYEGIVDRV…KKDQKGIWNE (142 aa)) constitute a TNase-like domain. Catalysis depends on residues Arg-404, Glu-412, and Arg-460. The segment at 590 to 828 (LRILSMNDLH…VIFAAHNHQV (239 aa)) is phosphoesterase. Asp-597, His-599, Asp-647, Asn-680, His-792, and His-824 together coordinate a divalent metal cation. The interval 829–1085 (VNGEVNGKLI…AYTKEGRIKL (257 aa)) is 5'-nucleotidase. Residues Phe-965 and 1035 to 1042 (FMATATGA) contribute to the substrate site. Residues 1087–1142 (EASDIEDPVTEDPITEEPGDDPGTEDPIKEDPRPGEDLPDIKETPGTAPVHQLPPS) form a disordered region. Residues 1089–1110 (SDIEDPVTEDPITEEPGDDPGT) are compositionally biased toward acidic residues. A compositionally biased stretch (basic and acidic residues) spans 1112–1129 (DPIKEDPRPGEDLPDIKE). The LPXTG sorting signal signature appears at 1182–1186 (LPDTS). At Thr-1185 the chain carries Pentaglycyl murein peptidoglycan amidated threonine. A propeptide spans 1186-1217 (SAGYYNFMVIGAAVTLSGTYLYVRRKRSASRT) (removed by sortase).

In the C-terminal section; belongs to the 5'-nucleotidase family. Requires Ca(2+) as cofactor. Mn(2+) serves as cofactor.

It is found in the secreted. The protein resides in the cell wall. Requires a minimum of 0.1 mM of calcium for a significant activity. Maximal activity was observed with concentrations of calcium between 1 to 5 mM. Is 10-fold less active with the corresponding concentrations of manganese. Inhibited by NaCl at concentrations of 100 mM and higher. Its function is as follows. Sugar-nonspecific endonuclease that yields nucleotide 3'-monophosphate products. No 5'-nucleotidase activity was detected, using 5'-AMP as the substrate, in the presence of diverse divalent metals and with various pH values. The polypeptide is Endonuclease YhcR (yhcR) (Bacillus subtilis (strain 168)).